The primary structure comprises 837 residues: Ribosome biogenesis ATPase RIX7 (837 aa).

2 disordered regions span residues 36–56 (RSLR…EEDE) and 149–207 (ITST…LKSL). S42 carries the post-translational modification Phosphoserine. A compositionally biased stretch (acidic residues) spans 43 to 56 (QGEEGENNEGEEDE). Over residues 149–163 (ITSTWSKSGSVSESI) the composition is skewed to polar residues. Over residues 176 to 192 (KSKKRSKEGTCKVKRQK) the composition is skewed to basic residues. 246 to 253 (GPPGCGKT) is an ATP binding site. The segment at 443–468 (PTTATDSSEDNMEIDETANGDESSLK) is disordered. Residues 449 to 461 (SSEDNMEIDETAN) show a composition bias toward acidic residues. 574–581 (GPPGCGKT) provides a ligand contact to ATP.

It belongs to the AAA ATPase family.

The protein localises to the nucleus. It is found in the nucleolus. In terms of biological role, involved in ribosome biogenesis. Seems to be required for restructuring nucleoplasmic 60S pre-ribosomal particles to make them competent for nuclear export. This Saccharomyces cerevisiae (strain ATCC 204508 / S288c) (Baker's yeast) protein is Ribosome biogenesis ATPase RIX7 (RIX7).